Here is a 675-residue protein sequence, read N- to C-terminus: Glycerophosphocholine phosphodiesterase GPCPD1 (675 aa).

The CBM20 domain maps to Met-1–Ile-115. Substrate contacts are provided by residues Arg-70 and His-88–Lys-89. Residues Ser-178 and Ser-427 each carry the phosphoserine modification. Residues Pro-321–Gln-621 enclose the GP-PDE domain. Phosphotyrosine is present on Tyr-611.

This sequence belongs to the glycerophosphoryl diester phosphodiesterase family. Widely expressed with highest levels in skeletal muscle and heart.

It localises to the cytoplasm. The protein localises to the cytosol. The enzyme catalyses sn-glycerol 3-phosphocholine + H2O = sn-glycerol 3-phosphate + choline + H(+). May be involved in the negative regulation of skeletal muscle differentiation, independently of its glycerophosphocholine phosphodiesterase activity. The polypeptide is Glycerophosphocholine phosphodiesterase GPCPD1 (Gpcpd1) (Mus musculus (Mouse)).